Here is a 572-residue protein sequence, read N- to C-terminus: Proline--tRNA ligase (572 aa).

This sequence belongs to the class-II aminoacyl-tRNA synthetase family. ProS type 1 subfamily. As to quaternary structure, homodimer.

It localises to the cytoplasm. It catalyses the reaction tRNA(Pro) + L-proline + ATP = L-prolyl-tRNA(Pro) + AMP + diphosphate. In terms of biological role, catalyzes the attachment of proline to tRNA(Pro) in a two-step reaction: proline is first activated by ATP to form Pro-AMP and then transferred to the acceptor end of tRNA(Pro). As ProRS can inadvertently accommodate and process non-cognate amino acids such as alanine and cysteine, to avoid such errors it has two additional distinct editing activities against alanine. One activity is designated as 'pretransfer' editing and involves the tRNA(Pro)-independent hydrolysis of activated Ala-AMP. The other activity is designated 'posttransfer' editing and involves deacylation of mischarged Ala-tRNA(Pro). The misacylated Cys-tRNA(Pro) is not edited by ProRS. In Klebsiella pneumoniae subsp. pneumoniae (strain ATCC 700721 / MGH 78578), this protein is Proline--tRNA ligase.